Reading from the N-terminus, the 301-residue chain is Ribosomal RNA large subunit methyltransferase F (301 aa).

Belongs to the methyltransferase superfamily. METTL16/RlmF family.

It is found in the cytoplasm. It catalyses the reaction adenosine(1618) in 23S rRNA + S-adenosyl-L-methionine = N(6)-methyladenosine(1618) in 23S rRNA + S-adenosyl-L-homocysteine + H(+). Specifically methylates the adenine in position 1618 of 23S rRNA. The sequence is that of Ribosomal RNA large subunit methyltransferase F from Colwellia psychrerythraea (strain 34H / ATCC BAA-681) (Vibrio psychroerythus).